The chain runs to 312 residues: Mas-related G-protein coupled receptor member B3 (312 aa).

Over 1 to 31 (MALRTSLITTTAPDKTSLPISICIIKFQVMN) the chain is Extracellular. Residues 32–52 (LLSITISPVGMVLNIIVLWFL) traverse the membrane as a helical segment. Topologically, residues 53 to 67 (GFQICRNAFSAYILN) are cytoplasmic. A helical transmembrane segment spans residues 68 to 88 (LAVADFLFLCSHSIFSFLIVC). Over 89 to 106 (KLHYFLFYIRQLLDTVTM) the chain is Extracellular. A helical transmembrane segment spans residues 107–127 (FAYVFGLSITTIISIECCLSI). Over 128 to 140 (MWPIWYHCQRPRH) the chain is Cytoplasmic. A helical transmembrane segment spans residues 141–161 (TSAVICVLLWALSLLFPALQM). Over 162-180 (EKCSVLFNTFEYSWCGIIN) the chain is Extracellular. Residues 181–201 (IISGAWLVVLFVVLCGFSLIL) form a helical membrane-spanning segment. The Cytoplasmic portion of the chain corresponds to 202–220 (LLRISCGSQQIPVTRLNVT). The chain crosses the membrane as a helical span at residues 221–241 (IALRVLLLLIFGIPFGIFWIV). Residues 242–259 (DKWNEENFFVRACGFSHH) are Extracellular-facing. A helical transmembrane segment spans residues 260 to 280 (ILYVYCINICVNATIYFLVGS). At 281-312 (IRHGKFQKMTLKLILQRAIQGTPEEEGGERGP) the chain is on the cytoplasmic side.

It belongs to the G-protein coupled receptor 1 family. Mas subfamily.

Its subcellular location is the membrane. Its function is as follows. Orphan receptor. Probably involved in the function of nociceptive neurons. May regulate nociceptor function and/or development, including the sensation or modulation of pain. This is Mas-related G-protein coupled receptor member B3 (Mrgprb3) from Mus musculus (Mouse).